We begin with the raw amino-acid sequence, 371 residues long: Interstrand DNA cross-link repair glycosylase (371 aa).

The QXQ; important for activity motif lies at 37–39; it reads QAQ.

The protein belongs to the DNA glycosylase AlkZ-like family.

In terms of biological role, DNA glycosylase involved in the repair of interstrand DNA cross-links (ICLs), which are highly toxic DNA lesions that covalently tether the opposing strands of DNA, thereby inhibiting essential cellular processes such as DNA replication and transcription. Acts by unhooking both sides of the ICLs, forming abasic (AP) sites on both strands. AlkZ specifically repairs DNA damage induced by azinomycin B (AZB), a natural product with potent antibiotic and antitumor activities that interacts covalently with duplex DNA and forms ICLs. AlkZ thus confers self-resistance to azinomycin B, which is produced by S.sahachiroi. It may also protect target sites by protein-DNA interaction. Binds sequence non-specifically to native DNA and structure-specifically to azinomycin B-modified sites, with higher affinity to azinomycin B-modified sites and lower affinity to native DNA duplex. In vitro, also acts on monoadducts and can catalyze the excision of N7-methylguanine (7mGua) from an oligonucleotide containing N7-methyldeoxyguanosine (d7mG). Is a monofunctional DNA glycosylase that does not have lyase activity. In Streptomyces sahachiroi, this protein is Interstrand DNA cross-link repair glycosylase.